A 473-amino-acid chain; its full sequence is Ribulose bisphosphate carboxylase large chain (473 aa).

Substrate-binding residues include N116 and T166. Catalysis depends on K168, which acts as the Proton acceptor. Position 170 (K170) interacts with substrate. Mg(2+) is bound by residues K194, D196, and E197. At K194 the chain carries N6-carboxylysine. H287 acts as the Proton acceptor in catalysis. Residues R288, H320, and S372 each contribute to the substrate site.

Belongs to the RuBisCO large chain family. Type I subfamily. As to quaternary structure, heterohexadecamer of 8 large chains and 8 small chains. It depends on Mg(2+) as a cofactor.

The catalysed reaction is 2 (2R)-3-phosphoglycerate + 2 H(+) = D-ribulose 1,5-bisphosphate + CO2 + H2O. It carries out the reaction D-ribulose 1,5-bisphosphate + O2 = 2-phosphoglycolate + (2R)-3-phosphoglycerate + 2 H(+). Functionally, ruBisCO catalyzes two reactions: the carboxylation of D-ribulose 1,5-bisphosphate, the primary event in carbon dioxide fixation, as well as the oxidative fragmentation of the pentose substrate. Both reactions occur simultaneously and in competition at the same active site. This is Ribulose bisphosphate carboxylase large chain from Thiomonas intermedia (strain K12) (Thiobacillus intermedius).